The sequence spans 419 residues: Gamma-glutamyl phosphate reductase (419 aa).

The protein belongs to the gamma-glutamyl phosphate reductase family.

It is found in the cytoplasm. It catalyses the reaction L-glutamate 5-semialdehyde + phosphate + NADP(+) = L-glutamyl 5-phosphate + NADPH + H(+). Its pathway is amino-acid biosynthesis; L-proline biosynthesis; L-glutamate 5-semialdehyde from L-glutamate: step 2/2. In terms of biological role, catalyzes the NADPH-dependent reduction of L-glutamate 5-phosphate into L-glutamate 5-semialdehyde and phosphate. The product spontaneously undergoes cyclization to form 1-pyrroline-5-carboxylate. This is Gamma-glutamyl phosphate reductase from Caldicellulosiruptor bescii (strain ATCC BAA-1888 / DSM 6725 / KCTC 15123 / Z-1320) (Anaerocellum thermophilum).